A 344-amino-acid polypeptide reads, in one-letter code: Phenylalanine--tRNA ligase alpha subunit (344 aa).

Residue Glu-256 coordinates Mg(2+).

The protein belongs to the class-II aminoacyl-tRNA synthetase family. Phe-tRNA synthetase alpha subunit type 1 subfamily. Tetramer of two alpha and two beta subunits. Mg(2+) is required as a cofactor.

The protein localises to the cytoplasm. It catalyses the reaction tRNA(Phe) + L-phenylalanine + ATP = L-phenylalanyl-tRNA(Phe) + AMP + diphosphate + H(+). The protein is Phenylalanine--tRNA ligase alpha subunit of Bacillus pumilus (strain SAFR-032).